The following is a 175-amino-acid chain: NADH dehydrogenase [ubiquinone] 1 alpha subcomplex assembly factor 4 (175 aa).

A lipid anchor (N-myristoyl glycine) is attached at glycine 2. Serine 35 bears the Phosphoserine mark.

This sequence belongs to the NDUFAF4 family. As to quaternary structure, binds calmodulin. Interacts with NDUFAF3. In terms of assembly, (Microbial infection) Interacts with the vesicular stomatitis virus matrix protein/M; the interaction inhibits viral propagation. Post-translationally, phosphorylated on serine. Prolactin stimulate serine phosphorylation.

It localises to the mitochondrion. The protein localises to the membrane. Functionally, involved in the assembly of mitochondrial NADH:ubiquinone oxidoreductase complex (complex I). May be involved in cell proliferation and survival of hormone-dependent tumor cells. May be a regulator of breast tumor cell invasion. The polypeptide is NADH dehydrogenase [ubiquinone] 1 alpha subcomplex assembly factor 4 (Homo sapiens (Human)).